The following is a 374-amino-acid chain: Ribosomal RNA large subunit methyltransferase G (374 aa).

This sequence belongs to the methyltransferase superfamily. RlmG family.

The protein localises to the cytoplasm. It carries out the reaction guanosine(1835) in 23S rRNA + S-adenosyl-L-methionine = N(2)-methylguanosine(1835) in 23S rRNA + S-adenosyl-L-homocysteine + H(+). Functionally, specifically methylates the guanine in position 1835 (m2G1835) of 23S rRNA. The chain is Ribosomal RNA large subunit methyltransferase G from Pseudomonas aeruginosa (strain UCBPP-PA14).